Consider the following 256-residue polypeptide: GDSL esterase/lipase CPRD49 (256 aa).

The signal sequence occupies residues 1–27 (MVGPARPQIVLFGSSIVQMSFGHGGWG). Serine 15 functions as the Nucleophile in the catalytic mechanism. Asparagine 49 and asparagine 79 each carry an N-linked (GlcNAc...) asparagine glycan. Histidine 213 is an active-site residue. Asparagine 243 carries an N-linked (GlcNAc...) asparagine glycan.

This sequence belongs to the 'GDSL' lipolytic enzyme family. Specifically expressed in anthers (stages 8-12).

The protein resides in the secreted. This chain is GDSL esterase/lipase CPRD49 (CPRD49), found in Arabidopsis thaliana (Mouse-ear cress).